The primary structure comprises 329 residues: MTTSINSVVTVFQNVFTNHGSTLLNGILIATTVGGQSLVRKLTFSCPCAYPLNIYHSLVFMFGPTAALLLIGITVNSTTWKLAHGFFFRVRDTRHSWKTTCVSWIEVLIQSSVAPIAWLFVVFLDGGYYRCYRSHEFCLISDAILCKNSTILNSYASTSSFNKISDNGKYCPPCICVPNPTDASYLEAESQIYAWGLLLFSGVAAFLVITCNRMCDKYTLVQRQYVETYKNVETQKFDAVAKEHASQLAEHNARAFFGQKDWTKRDWDWVSGIPEVNNPLFARLRLIAAEKTQQTMYTPLQLWNDNKGYRIPQPDLQLTQIIVDETKED.

Topologically, residues 1–14 (MTTSINSVVTVFQN) are cytoplasmic. Residues 15–35 (VFTNHGSTLLNGILIATTVGG) traverse the membrane as a helical segment. Over 36-53 (QSLVRKLTFSCPCAYPLN) the chain is Extracellular. The helical transmembrane segment at 54-74 (IYHSLVFMFGPTAALLLIGIT) threads the bilayer. The Cytoplasmic portion of the chain corresponds to 75 to 103 (VNSTTWKLAHGFFFRVRDTRHSWKTTCVS). The chain crosses the membrane as a helical span at residues 104–124 (WIEVLIQSSVAPIAWLFVVFL). At 125 to 191 (DGGYYRCYRS…DASYLEAESQ (67 aa)) the chain is on the extracellular side. Residue Asn-148 is glycosylated (N-linked (GlcNAc...) asparagine). A helical transmembrane segment spans residues 192–212 (IYAWGLLLFSGVAAFLVITCN). The Cytoplasmic segment spans residues 213 to 329 (RMCDKYTLVQ…QIIVDETKED (117 aa)).

The protein belongs to the CALHM family. Expressed in head and body wall muscles, IL2, ASG, ASI, ASJ, PHA and PHB sensory neurons, and spermatheca.

Its subcellular location is the cell membrane. Pore-forming subunit of a voltage-gated ion channel. Permeable to monovalent cations, divalent cations and anions with selectivity Ca(2+) &gt; Mg(2+) &gt; Na(+) = K(+) &gt; Cl(-). Acts both as a voltage-gated and calcium-activated ion channel. Required for normal locomotion. The chain is Calcium homeostasis modulator protein from Caenorhabditis elegans.